The chain runs to 204 residues: Large ribosomal subunit protein eL15 (204 aa).

The protein belongs to the eukaryotic ribosomal protein eL15 family.

The protein is Large ribosomal subunit protein eL15 (RpL15) of Chironomus tentans (Midge).